The chain runs to 2556 residues: Ubiquitin carboxyl-terminal hydrolase 9Y (2556 aa).

Residues 1–33 show a composition bias toward polar residues; it reads MTITTRGSPVGENESQGQTSDGQPQPSFQQNQI. Positions 1–68 are disordered; the sequence is MTITTRGSPV…QHEEEDPSFP (68 aa). Positions 34 to 44 are enriched in low complexity; it reads SSSDSSNETSP. The residue at position 587 (serine 587) is a Phosphoserine. Residue threonine 589 is modified to Phosphothreonine. Positions 971 to 999 are disordered; sequence NMPSSPDSSSDSSAGPPGNHSHNNYRDVS. Over residues 973 to 983 the composition is skewed to low complexity; the sequence is PSSPDSSSDSS. The USP domain maps to 1559-1958; the sequence is VGLKNAGATC…NAYILFYERM (400 aa). Catalysis depends on cysteine 1568, which acts as the Nucleophile. Zn(2+) contacts are provided by cysteine 1729, histidine 1731, cysteine 1773, and cysteine 1776. The Proton acceptor role is filled by histidine 1881. Residue serine 2447 is modified to Phosphoserine. A disordered region spans residues 2513–2556; sequence QNYVPEQPFSGPASHHLNNPQKNDKPQETHESNEEISSCLIKDQ. Residues 2534 to 2545 are compositionally biased toward basic and acidic residues; it reads KNDKPQETHESN. Serine 2549 is subject to Phosphoserine.

This sequence belongs to the peptidase C19 family.

The enzyme catalyses Thiol-dependent hydrolysis of ester, thioester, amide, peptide and isopeptide bonds formed by the C-terminal Gly of ubiquitin (a 76-residue protein attached to proteins as an intracellular targeting signal).. It participates in protein modification; protein ubiquitination. Functionally, deubiquitinase that mediates deubiquitination of target proteins. May stabilize target proteins that are important for male germ cell development. This is Ubiquitin carboxyl-terminal hydrolase 9Y from Mus musculus (Mouse).